The following is a 653-amino-acid chain: 4-alpha-glucanotransferase (653 aa).

E123 functions as the Nucleophile in the catalytic mechanism. Residue D214 is the Proton donor of the active site.

This sequence belongs to the glycosyl hydrolase 57 family.

The enzyme catalyses Transfers a segment of a (1-&gt;4)-alpha-D-glucan to a new position in an acceptor, which may be glucose or a (1-&gt;4)-alpha-D-glucan.. In Thermococcus kodakarensis (strain ATCC BAA-918 / JCM 12380 / KOD1) (Pyrococcus kodakaraensis (strain KOD1)), this protein is 4-alpha-glucanotransferase.